The sequence spans 103 residues: Small ribosomal subunit protein uS10 (103 aa).

The protein belongs to the universal ribosomal protein uS10 family. Part of the 30S ribosomal subunit.

Involved in the binding of tRNA to the ribosomes. In Vibrio cholerae serotype O1 (strain ATCC 39541 / Classical Ogawa 395 / O395), this protein is Small ribosomal subunit protein uS10.